A 694-amino-acid polypeptide reads, in one-letter code: DNA-directed RNA polymerase subunit beta' (694 aa).

Residues C69, C71, C87, and C90 each contribute to the Zn(2+) site. Residues D489, D491, and D493 each contribute to the Mg(2+) site.

The protein belongs to the RNA polymerase beta' chain family. RpoC1 subfamily. In terms of assembly, in plastids the minimal PEP RNA polymerase catalytic core is composed of four subunits: alpha, beta, beta', and beta''. When a (nuclear-encoded) sigma factor is associated with the core the holoenzyme is formed, which can initiate transcription. The cofactor is Mg(2+). It depends on Zn(2+) as a cofactor.

It is found in the plastid. Its subcellular location is the chloroplast. It carries out the reaction RNA(n) + a ribonucleoside 5'-triphosphate = RNA(n+1) + diphosphate. DNA-dependent RNA polymerase catalyzes the transcription of DNA into RNA using the four ribonucleoside triphosphates as substrates. The protein is DNA-directed RNA polymerase subunit beta' of Adiantum capillus-veneris (Maidenhair fern).